Here is a 77-residue protein sequence, read N- to C-terminus: Conotoxin Bt6.6 (77 aa).

Positions 1–19 are cleaved as a signal peptide; the sequence is MEKLTILLLVAAVLMSTQA. Residues 20–38 constitute a propeptide that is removed on maturation; that stretch reads LIQSDGEKRQQAKINFLSX. 3 cysteine pairs are disulfide-bonded: cysteine 51/cysteine 65, cysteine 58/cysteine 69, and cysteine 64/cysteine 74.

Belongs to the conotoxin O2 superfamily. Expressed by the venom duct.

Its subcellular location is the secreted. The sequence is that of Conotoxin Bt6.6 from Conus betulinus (Beech cone).